Consider the following 234-residue polypeptide: MTENFILGRNNKLEHELKALADYINIPYSILQPYQSECFVRHYTKGQVIYFSPQESSNIYFLIEGNIIREHYNQNGDVYRYFNKEQVLFPISNLFHPKEVNELCTALTDCTVLGLPRELMAFLCKANDDIFLTLFALINDNEQQHMNYNMALTSKFAKDRIIKLICHLCQTVGYDQDEFYEIKQFLTIQLMSDMAGISRETAGHIIHELKDEKLVVKDHKNWLVSKHLFNDVCV.

Position 40–129 (40–129 (VRHYTKGQVI…MAFLCKANDD (90 aa))) interacts with a nucleoside 3',5'-cyclic phosphate. Positions 155 to 228 (KFAKDRIIKL…HKNWLVSKHL (74 aa)) constitute an HTH crp-type domain. A DNA-binding region (H-T-H motif) is located at residues 188-207 (IQLMSDMAGISRETAGHIIH).

Its subcellular location is the cytoplasm. Functionally, positively regulates the expression of the arcABDCR operon under anaerobic conditions, thus playing an essential role in arginine catabolism. May also control the expression of genes encoding proteins which are involved in anaerobic metabolism. Can bind cyclic AMP. The chain is HTH-type transcriptional regulator ArcR (arcR) from Staphylococcus aureus (strain USA300 / TCH1516).